We begin with the raw amino-acid sequence, 52 residues long: Conotoxin Ac4.3a (52 aa).

A propeptide spanning residues 1–11 (SDFRNAAVHER) is cleaved from the precursor. Gln12 carries the post-translational modification Pyrrolidone carboxylic acid. Glu14 carries the 4-carboxyglutamate modification. 2 O-linked (HexNAc...) threonine glycosylation sites follow: Thr18 and Thr20. 4-hydroxyproline is present on residues Pro28, Pro33, and Pro47. Position 47 is a proline amide (Pro47). Positions 48–52 (GRRND) are excised as a propeptide.

This sequence belongs to the conotoxin A superfamily. Contains 3 disulfide bonds. In terms of tissue distribution, expressed by the venom duct.

The protein localises to the secreted. Its function is as follows. Probable neurotoxin with ion channel inhibitor activity. The polypeptide is Conotoxin Ac4.3a (Conus achatinus (Little frog cone)).